A 453-amino-acid polypeptide reads, in one-letter code: uncharacterized protein (453 aa).

This is an uncharacterized protein from Caenorhabditis elegans.